A 793-amino-acid chain; its full sequence is Splicing factor 3A subunit 1 (793 aa).

The segment at 1-43 is disordered; the sequence is MPAGPVQAVPPPPPVPTEPKQPTEEEASSKEDSAPSKPVVGII. The segment covering 8 to 19 has biased composition (pro residues); that stretch reads AVPPPPPVPTEP. Lys-20 is covalently cross-linked (Glycyl lysine isopeptide (Lys-Gly) (interchain with G-Cter in SUMO2)). The segment covering 21–34 has biased composition (basic and acidic residues); sequence QPTEEEASSKEDSA. An SURP motif 1 repeat occupies 52–94; sequence IVDKTASFVARNGPEFEARIRQNEINNPKFNFLNPNDPYHAYY. Lys-55 carries the N6-acetyllysine modification. Residue Lys-131 forms a Glycyl lysine isopeptide (Lys-Gly) (interchain with G-Cter in SUMO2) linkage. The stretch at 166-208 is one SURP motif 2 repeat; the sequence is VVKLTAQFVARNGRQFLTQLMQKEQRNYQFDFLRPQHSLFNYF. A disordered region spans residues 318–428; the sequence is GESEEVEMEV…KIPASKMQEH (111 aa). 3 positions are modified to phosphoserine: Ser-320, Ser-329, and Ser-359. Composition is skewed to acidic residues over residues 320–334 and 354–364; these read SEEV…EEDD and DMDEGSDDEEE. Residues 368 to 384 show a composition bias toward pro residues; that stretch reads VPPPPETPMPPPLPPTP. The segment covering 388–397 has biased composition (basic and acidic residues); it reads IVRKDYDPKA. Ser-413 is subject to Phosphoserine. Lys-424 is covalently cross-linked (Glycyl lysine isopeptide (Lys-Gly) (interchain with G-Cter in SUMO2)). Ser-451 is modified (phosphoserine). At Tyr-456 the chain carries Phosphotyrosine. Residues 488–502 show a composition bias toward basic and acidic residues; the sequence is IGEEEIQKPEEKVTW. Disordered stretches follow at residues 488-518, 530-584, and 665-688; these read IGEE…AAQA, HKAK…TMPP, and APMP…LKTE. A Glycyl lysine isopeptide (Lys-Gly) (interchain with G-Cter in SUMO2) cross-link involves residue Lys-499. Ser-508 carries the post-translational modification Phosphoserine. Residues 509–518 show a composition bias toward polar residues; sequence MARTQQAAQA. A Glycyl lysine isopeptide (Lys-Gly) (interchain with G-Cter in SUMO2) cross-link involves residue Lys-542. The span at 665-675 shows a compositional bias: pro residues; sequence APMPPVHPPPP. A required and sufficient for nuclear import region spans residues 680–702; sequence PTSKKLKTEDSLMPEEEFLRRNK. A Glycyl lysine isopeptide (Lys-Gly) (interchain with G-Cter in SUMO2) cross-link involves residue Lys-686. A Ubiquitin-like domain is found at 707–793; it reads IKVQVPNMQD…ALKERGGRKK (87 aa). Tyr-759 is modified (phosphotyrosine).

Component of the 17S U2 SnRNP complex, a ribonucleoprotein complex that contains small nuclear RNA (snRNA) U2 and a number of specific proteins. Part of the SF3A subcomplex of the 17S U2 SnRNP complex which is composed of three subunits; SF3A3/SAP61, SF3A2/SAP62 and SF3A1/SAP114. SF3A associates with the splicing factor SF3B and a 12S RNA unit to form the mature 17S U2 small nuclear ribonucleoprotein complex (17S U2 snRNP). SF3A1 functions as a scaffold that interacts directly with both SF3A2 and SF3A3. Identified in the spliceosome 'E' complex, a precursor of the spliceosome 'A' complex. Identified in the spliceosome 'A' and 'B' complexes. Identified in the spliceosome 'C' complex. Interacts with P2RX6; resulting in a reduction of the splicing activity. Ubiquitously expressed.

Its subcellular location is the nucleus. It is found in the nucleus speckle. Its function is as follows. Component of the 17S U2 SnRNP complex of the spliceosome, a large ribonucleoprotein complex that removes introns from transcribed pre-mRNAs. The 17S U2 SnRNP complex (1) directly participates in early spliceosome assembly and (2) mediates recognition of the intron branch site during pre-mRNA splicing by promoting the selection of the pre-mRNA branch-site adenosine, the nucleophile for the first step of splicing. Within the 17S U2 SnRNP complex, SF3A1 is part of the SF3A subcomplex that contributes to the assembly of the 17S U2 snRNP, and the subsequent assembly of the pre-spliceosome 'E' complex and the pre-catalytic spliceosome 'A' complex. Involved in pre-mRNA splicing as a component of pre-catalytic spliceosome 'B' complexes. The polypeptide is Splicing factor 3A subunit 1 (SF3A1) (Homo sapiens (Human)).